The following is a 299-amino-acid chain: 4-diphosphocytidyl-2-C-methyl-D-erythritol kinase (299 aa).

Lys20 is a catalytic residue. 106-116 contacts ATP; the sequence is PMGGGLGGGSS. Asp148 is a catalytic residue.

Belongs to the GHMP kinase family. IspE subfamily. In terms of assembly, homodimer.

The catalysed reaction is 4-CDP-2-C-methyl-D-erythritol + ATP = 4-CDP-2-C-methyl-D-erythritol 2-phosphate + ADP + H(+). The protein operates within isoprenoid biosynthesis; isopentenyl diphosphate biosynthesis via DXP pathway; isopentenyl diphosphate from 1-deoxy-D-xylulose 5-phosphate: step 3/6. Functionally, catalyzes the phosphorylation of the position 2 hydroxy group of 4-diphosphocytidyl-2C-methyl-D-erythritol. In Yersinia pseudotuberculosis serotype O:1b (strain IP 31758), this protein is 4-diphosphocytidyl-2-C-methyl-D-erythritol kinase.